The sequence spans 597 residues: Nucleolar protein 58 (597 aa).

One can recognise a Nop domain in the interval 285 to 410; it reads IAPNMTELVG…LENNLRQLEG (126 aa). Residues 452–597 form a disordered region; it reads AEAPKKPLIQ…KKKKKKSSKE (146 aa). Residues 482–499 show a composition bias toward basic residues; sequence KSKKDKKEKKEKKDKKAK. The span at 532-551 shows a compositional bias: basic and acidic residues; that stretch reads IKEDGTLEILSKKDFKGKDA. Positions 552–561 are enriched in acidic residues; the sequence is EAEEEAEEEE. A compositionally biased stretch (basic residues) spans 588 to 597; that stretch reads KKKKKKSSKE.

This sequence belongs to the NOP5/NOP56 family.

The protein resides in the nucleus. It is found in the nucleolus. Required for pre-18S rRNA processing. May bind microtubules. This Neurospora crassa (strain ATCC 24698 / 74-OR23-1A / CBS 708.71 / DSM 1257 / FGSC 987) protein is Nucleolar protein 58 (nop-58).